Here is a 260-residue protein sequence, read N- to C-terminus: Indole-3-glycerol phosphate synthase (260 aa).

Belongs to the TrpC family.

The enzyme catalyses 1-(2-carboxyphenylamino)-1-deoxy-D-ribulose 5-phosphate + H(+) = (1S,2R)-1-C-(indol-3-yl)glycerol 3-phosphate + CO2 + H2O. The protein operates within amino-acid biosynthesis; L-tryptophan biosynthesis; L-tryptophan from chorismate: step 4/5. This chain is Indole-3-glycerol phosphate synthase, found in Staphylococcus saprophyticus subsp. saprophyticus (strain ATCC 15305 / DSM 20229 / NCIMB 8711 / NCTC 7292 / S-41).